The chain runs to 90 residues: Co-chaperonin GroES (90 aa).

The protein belongs to the GroES chaperonin family. In terms of assembly, heptamer of 7 subunits arranged in a ring. Interacts with the chaperonin GroEL.

It is found in the cytoplasm. Its function is as follows. Together with the chaperonin GroEL, plays an essential role in assisting protein folding. The GroEL-GroES system forms a nano-cage that allows encapsulation of the non-native substrate proteins and provides a physical environment optimized to promote and accelerate protein folding. GroES binds to the apical surface of the GroEL ring, thereby capping the opening of the GroEL channel. This is Co-chaperonin GroES from Thermosipho melanesiensis (strain DSM 12029 / CIP 104789 / BI429).